A 397-amino-acid chain; its full sequence is Protochlorophyllide reductase, chloroplastic (397 aa).

A chloroplast-targeting transit peptide spans 1 to 57 (MALTMSAKSVSARAQVSSKAQAAPAVAVSGRTSSRVMPAPALAARSSVARTPLVVCA).

Belongs to the short-chain dehydrogenases/reductases (SDR) family. POR subfamily.

It is found in the plastid. It localises to the chloroplast. It catalyses the reaction chlorophyllide a + NADP(+) = protochlorophyllide a + NADPH + H(+). Its pathway is porphyrin-containing compound metabolism; chlorophyll biosynthesis. In terms of biological role, phototransformation of protochlorophyllide (Pchlide) to chlorophyllide (Chlide). The chain is Protochlorophyllide reductase, chloroplastic (PORA) from Chlamydomonas reinhardtii (Chlamydomonas smithii).